A 130-amino-acid chain; its full sequence is S-adenosylmethionine decarboxylase proenzyme (130 aa).

The active-site Schiff-base intermediate with substrate; via pyruvic acid is the serine 66. Pyruvic acid (Ser); by autocatalysis is present on serine 66. Catalysis depends on histidine 71, which acts as the Proton acceptor; for processing activity. Cysteine 86 serves as the catalytic Proton donor; for catalytic activity.

This sequence belongs to the prokaryotic AdoMetDC family. Type 1 subfamily. As to quaternary structure, heterotetramer of two alpha and two beta chains arranged as a dimer of alpha/beta heterodimers. Pyruvate is required as a cofactor. Is synthesized initially as an inactive proenzyme. Formation of the active enzyme involves a self-maturation process in which the active site pyruvoyl group is generated from an internal serine residue via an autocatalytic post-translational modification. Two non-identical subunits are generated from the proenzyme in this reaction, and the pyruvate is formed at the N-terminus of the alpha chain, which is derived from the carboxyl end of the proenzyme. The post-translation cleavage follows an unusual pathway, termed non-hydrolytic serinolysis, in which the side chain hydroxyl group of the serine supplies its oxygen atom to form the C-terminus of the beta chain, while the remainder of the serine residue undergoes an oxidative deamination to produce ammonia and the pyruvoyl group blocking the N-terminus of the alpha chain.

The enzyme catalyses S-adenosyl-L-methionine + H(+) = S-adenosyl 3-(methylsulfanyl)propylamine + CO2. It participates in amine and polyamine biosynthesis; S-adenosylmethioninamine biosynthesis; S-adenosylmethioninamine from S-adenosyl-L-methionine: step 1/1. Catalyzes the decarboxylation of S-adenosylmethionine to S-adenosylmethioninamine (dcAdoMet), the propylamine donor required for the synthesis of the polyamines spermine and spermidine from the diamine putrescine. This is S-adenosylmethionine decarboxylase proenzyme from Bacillus cereus (strain ATCC 10987 / NRS 248).